The sequence spans 232 residues: MNEAKRILLEGLWRNNSSLVQLLGLCPLLAVSNTATNALGLGLATTLVLVCTNTAVSALRRWITGEIRIPIYVMIIASVVSAVQMLINAYAFGLYQSLGIFIPLIVTNCIVIGRAEAYASQRPPALAALDGLSIGLGSTCTLLLLGALREVLGNGTLFDGADQLLGAWARVLRIEVFHTDTPFLLAMLPPGAFIGLGFMLVGKYLIDQRMKARQPKAARPVVLQQGQPLADE.

6 consecutive transmembrane segments (helical) span residues 12–31 (LWRN…LLAV), 39–59 (LGLG…VSAL), 69–89 (IPIY…LINA), 92–112 (FGLY…CIVI), 125–145 (ALAA…LLLL), and 182–202 (PFLL…MLVG).

Belongs to the NqrDE/RnfAE family. In terms of assembly, the complex is composed of six subunits: RnfA, RnfB, RnfC, RnfD, RnfE and RnfG.

Its subcellular location is the cell inner membrane. In terms of biological role, part of a membrane-bound complex that couples electron transfer with translocation of ions across the membrane. In Sodalis glossinidius (strain morsitans), this protein is Ion-translocating oxidoreductase complex subunit E.